The chain runs to 429 residues: UDP-N-acetylglucosamine 1-carboxyvinyltransferase (429 aa).

K22–N23 contributes to the phosphoenolpyruvate binding site. Residue R102 coordinates UDP-N-acetyl-alpha-D-glucosamine. The active-site Proton donor is the C126. Position 126 is a 2-(S-cysteinyl)pyruvic acid O-phosphothioketal (C126). Residues R131–L135, D316, and I338 contribute to the UDP-N-acetyl-alpha-D-glucosamine site.

This sequence belongs to the EPSP synthase family. MurA subfamily.

It localises to the cytoplasm. It catalyses the reaction phosphoenolpyruvate + UDP-N-acetyl-alpha-D-glucosamine = UDP-N-acetyl-3-O-(1-carboxyvinyl)-alpha-D-glucosamine + phosphate. It functions in the pathway cell wall biogenesis; peptidoglycan biosynthesis. Functionally, cell wall formation. Adds enolpyruvyl to UDP-N-acetylglucosamine. In Methylobacterium nodulans (strain LMG 21967 / CNCM I-2342 / ORS 2060), this protein is UDP-N-acetylglucosamine 1-carboxyvinyltransferase.